The sequence spans 319 residues: Lambda-crystallin homolog (319 aa).

Position 2 is an N-acetylalanine (Ala2). Residue Ser3 is modified to Phosphoserine. NAD(+) contacts are provided by residues 16–17 (LI), Asp36, Glu97, and Lys102.

Belongs to the 3-hydroxyacyl-CoA dehydrogenase family. Homodimer. In terms of tissue distribution, widely expressed, with highest levels in liver. Undetectable in skeletal muscle.

The protein resides in the cytoplasm. The catalysed reaction is L-gulonate + NAD(+) = 3-dehydro-L-gulonate + NADH + H(+). With respect to regulation, inhibited by malonate. In terms of biological role, has high L-gulonate 3-dehydrogenase activity. It also exhibits low dehydrogenase activity toward L-3-hydroxybutyrate (HBA) and L-threonate. This Mus musculus (Mouse) protein is Lambda-crystallin homolog (Cryl1).